The chain runs to 541 residues: Formimidoyltransferase-cyclodeaminase (541 aa).

Residues 1–181 (MSQLVECVPN…GATVAGARKF (181 aa)) are formiminotransferase N-subdomain. H82 acts as the For formimidoyltransferase activity in catalysis. 163–172 (GPSAFVPSWG) serves as a coordination point for folate. A formiminotransferase C-subdomain region spans residues 182–326 (LLAFNINLLS…PKERIIEYLV (145 aa)). The linker stretch occupies residues 327–334 (PEAGPEQS). The interval 335-541 (LLHKPLRTFV…VLDRLEARQA (207 aa)) is cyclodeaminase/cyclohydrolase. The active-site For cyclodeaminase activity is the D412. Position 520 is a phosphoserine (S520).

In the C-terminal section; belongs to the cyclodeaminase/cyclohydrolase family. The protein in the N-terminal section; belongs to the formiminotransferase family. Homooctamer, including four polyglutamate binding sites. The subunits are arranged as a tetramer of dimers, and form a planar ring-shaped structure.

Its subcellular location is the cytoplasm. It is found in the cytosol. It localises to the golgi apparatus. The protein resides in the cytoskeleton. The protein localises to the microtubule organizing center. Its subcellular location is the centrosome. It is found in the centriole. It carries out the reaction 5-formimidoyltetrahydrofolate + L-glutamate = N-formimidoyl-L-glutamate + (6S)-5,6,7,8-tetrahydrofolate. The enzyme catalyses 5-formimidoyltetrahydrofolate + 2 H(+) = (6R)-5,10-methenyltetrahydrofolate + NH4(+). It functions in the pathway amino-acid degradation; L-histidine degradation into L-glutamate; L-glutamate from N-formimidoyl-L-glutamate (transferase route): step 1/1. Functionally, folate-dependent enzyme, that displays both transferase and deaminase activity. Serves to channel one-carbon units from formiminoglutamate to the folate pool. In terms of biological role, binds and promotes bundling of vimentin filaments originating from the Golgi. The chain is Formimidoyltransferase-cyclodeaminase (FTCD) from Sus scrofa (Pig).